Reading from the N-terminus, the 146-residue chain is MTSAITEQLLKAKKAKGITFTELEQLLGRDEVWIASVFYRQSTASPEEAEKLLTALGLDLALADELTTPPVKGCLEPVIPTDPLIYRFYEIMQVYGLPLKDVIQEKFGDGIMSAIDFTLDVDKVEDPKGDRVKVTMCGKFLAYKKW.

Residues R87, E90, and S113 contribute to the active site.

Belongs to the cyanase family.

It carries out the reaction cyanate + hydrogencarbonate + 3 H(+) = NH4(+) + 2 CO2. Catalyzes the reaction of cyanate with bicarbonate to produce ammonia and carbon dioxide. The sequence is that of Cyanate hydratase from Synechococcus elongatus (strain ATCC 33912 / PCC 7942 / FACHB-805) (Anacystis nidulans R2).